Consider the following 248-residue polypeptide: Indole-3-glycerol phosphate synthase (248 aa).

It belongs to the TrpC family.

The enzyme catalyses 1-(2-carboxyphenylamino)-1-deoxy-D-ribulose 5-phosphate + H(+) = (1S,2R)-1-C-(indol-3-yl)glycerol 3-phosphate + CO2 + H2O. The protein operates within amino-acid biosynthesis; L-tryptophan biosynthesis; L-tryptophan from chorismate: step 4/5. This Sulfolobus acidocaldarius (strain ATCC 33909 / DSM 639 / JCM 8929 / NBRC 15157 / NCIMB 11770) protein is Indole-3-glycerol phosphate synthase.